The chain runs to 318 residues: Aspartate carbamoyltransferase catalytic subunit (318 aa).

2 residues coordinate carbamoyl phosphate: arginine 55 and threonine 56. L-aspartate is bound at residue lysine 83. 3 residues coordinate carbamoyl phosphate: arginine 105, histidine 138, and glutamine 141. Positions 171 and 225 each coordinate L-aspartate. Residues glycine 266 and proline 267 each coordinate carbamoyl phosphate.

This sequence belongs to the aspartate/ornithine carbamoyltransferase superfamily. ATCase family. In terms of assembly, heterododecamer (2C3:3R2) of six catalytic PyrB chains organized as two trimers (C3), and six regulatory PyrI chains organized as three dimers (R2).

It carries out the reaction carbamoyl phosphate + L-aspartate = N-carbamoyl-L-aspartate + phosphate + H(+). It functions in the pathway pyrimidine metabolism; UMP biosynthesis via de novo pathway; (S)-dihydroorotate from bicarbonate: step 2/3. Functionally, catalyzes the condensation of carbamoyl phosphate and aspartate to form carbamoyl aspartate and inorganic phosphate, the committed step in the de novo pyrimidine nucleotide biosynthesis pathway. This is Aspartate carbamoyltransferase catalytic subunit from Corynebacterium kroppenstedtii (strain DSM 44385 / JCM 11950 / CIP 105744 / CCUG 35717).